Reading from the N-terminus, the 498-residue chain is MRINPTTSGPAVSTLEEKNLGRIAQIIGPVLDVVFPPGKMPNIYNALVVKGRDTVGQQINVTCEVQQLLGNNRVRAVAMSATDGLTRGMEVIDTGAPLSVPVGGATLGRIFNVLGEPVDNLGPVDTRTTSPIHRSAPAFIQLDTKLSIFETGIKVVDLLAPYRRGGKIGLFGGAGVGKTVLIMELINNIAKAHGGVSVFGGVSERTREGNDLYMEMKESGVINEKNIAESKVALVYGQMNEPPGARMRVGLTALTMAEYFRDVNEQDVLLFIDNIFRFVQAGSEVSALLGRMPSAVGYQPTLSTEMGTLQERITSTKEGSITSIQAVYVPADDLTDPAPATTFAHLDATTVLSRGLAAKGIYPAVDPLDSTSTMLQPRIVGEEHYETAQRVKQTLQRYKELQDIIAILGLDELSEEDRLTVARARKIERFLSQPFFVAEVFTGSPGKYVGLAETIRGFQLILSGELDGLPEQAFYLVGNIDEATAKAMNLEGESNLKK.

172-179 (GGAGVGKT) is a binding site for ATP.

This sequence belongs to the ATPase alpha/beta chains family. In terms of assembly, F-type ATPases have 2 components, CF(1) - the catalytic core - and CF(0) - the membrane proton channel. CF(1) has five subunits: alpha(3), beta(3), gamma(1), delta(1), epsilon(1). CF(0) has four main subunits: a(1), b(1), b'(1) and c(9-12).

Its subcellular location is the plastid. It is found in the chloroplast thylakoid membrane. It carries out the reaction ATP + H2O + 4 H(+)(in) = ADP + phosphate + 5 H(+)(out). Produces ATP from ADP in the presence of a proton gradient across the membrane. The catalytic sites are hosted primarily by the beta subunits. This is ATP synthase subunit beta, chloroplastic from Agapanthus africanus (Lily of the Nile).